Consider the following 1513-residue polypeptide: DNA polymerase alpha catalytic subunit (1513 aa).

The segment at 235–254 (STNQNANASDSKRVSNQTND) is disordered. Positions 1344, 1347, 1370, 1373, 1404, 1409, 1422, and 1427 each coordinate Zn(2+). The CysA-type zinc-finger motif lies at 1344–1373 (CPHCSESYHFPGIFQDGKNNTLSGLLCIKC). A CysB motif motif is present at residues 1404–1427 (CQEPACGAVSRQLLYNNKCINLAC).

This sequence belongs to the DNA polymerase type-B family.

The protein localises to the nucleus. It carries out the reaction DNA(n) + a 2'-deoxyribonucleoside 5'-triphosphate = DNA(n+1) + diphosphate. Its function is as follows. Polymerase alpha in a complex with DNA primase is a replicative polymerase. The polypeptide is DNA polymerase alpha catalytic subunit (Oxytricha trifallax (Sterkiella histriomuscorum)).